Consider the following 749-residue polypeptide: Phototropin (749 aa).

Residues 7–80 (PASQLTKVLA…QKIRDAIKKG (74 aa)) form the PAS 1 domain. Residues 56 to 61 (NCRFLQ), R74, N89, N99, and Q120 each bind FMN. C57 bears the S-4a-FMN cysteine mark. The PAC 1 domain maps to 81-135 (EACSVRLLNYRKDGTPFWNLLTVTPIKTPDGRVSKFVGVQVDVTSKTEGKALADN). The region spanning 200-273 (VALDLATTVE…DQIRAAIKEG (74 aa)) is the PAS 2 domain. Positions 274–328 (SELTVRILNYTKAGKAFWNMFTLAPMRDQDGHARFFVGVQVDVTAQSTSPDKAPV) constitute a PAC 2 domain. The Protein kinase domain occupies 404 to 712 (FRRVKQLGAG…ANEIKSHPWF (309 aa)). Residues 410–418 (LGAGDVGLV) and K433 contribute to the ATP site. D529 acts as the Proton acceptor in catalysis. Disordered regions lie at residues 563–591 (KIGGAGAAGGSAPKSPKKSSSKSGGSSSG) and 729–749 (PRRASKAAGGSSTGGAAFDNY). The 37-residue stretch at 713-749 (KGINWALLRHQQPPYVPRRASKAAGGSSTGGAAFDNY) folds into the AGC-kinase C-terminal domain. Low complexity predominate over residues 734–749 (KAAGGSSTGGAAFDNY).

This sequence belongs to the protein kinase superfamily. AGC Ser/Thr protein kinase family. FMN serves as cofactor. Post-translationally, autophosphorylated in response to blue light irradiation. 2 molecules of FMN bind covalently to cysteines after exposure to blue light and are reversed in the dark. As to expression, expressed in gametes, pre-gametes and gametes generated by pre-gametes (at protein level).

The protein resides in the membrane. The enzyme catalyses L-seryl-[protein] + ATP = O-phospho-L-seryl-[protein] + ADP + H(+). The catalysed reaction is L-threonyl-[protein] + ATP = O-phospho-L-threonyl-[protein] + ADP + H(+). Functionally, protein kinase that acts as a blue light photoreceptor. Required for non-photochemical quenching (NPQ), a mechanism that converts and dissipates the harmful excess absorbed light energy into heat and protect the photosynthetic apparatus from photo-oxidative damage. Controls the energy-dependent chlorophyll fluorescence quenching (qE) activity of chlorophyll excited states by inducing the expression of the qE effector protein LHCSR3 in high light intensities. In Chlamydomonas reinhardtii (Chlamydomonas smithii), this protein is Phototropin.